Here is a 604-residue protein sequence, read N- to C-terminus: Serine/threonine-protein kinase A-Raf (604 aa).

The RBD domain maps to 19 to 91 (GTVKVYLPNK…DGEELIVEVL (73 aa)). The segment at 98-144 (MHNFVRKTFFSLAFCDFCLKFLFHGFRCQTCGYKFHQHCSSKVPTVC) adopts a Phorbol-ester/DAG-type zinc-finger fold. His99, Cys112, Cys115, Cys125, Cys128, His133, Cys136, and Cys144 together coordinate Zn(2+). 2 positions are modified to phosphoserine: Ser157 and Ser162. Disordered stretches follow at residues 178 to 222 (ELLT…HMVS) and 241 to 287 (TDAA…DEKK). Position 181 is a phosphothreonine (Thr181). Ser186 carries the post-translational modification Phosphoserine. Residues 210–222 (IRSTSTPNVHMVS) show a composition bias toward polar residues. Residues 252–265 (PRGSPSPASVSSGR) show a composition bias toward low complexity. Phosphoserine occurs at positions 255 and 267. The segment covering 272–287 (LPAEQRERKSLADEKK) has biased composition (basic and acidic residues). Positions 308-568 (VQLLKRIGTG…PQILATIELL (261 aa)) constitute a Protein kinase domain. ATP-binding positions include 314–322 (IGTGSFGTV) and Lys334. Position 316 is a phosphothreonine (Thr316). The active-site Proton acceptor is the Asp427.

Belongs to the protein kinase superfamily. TKL Ser/Thr protein kinase family. RAF subfamily. As to quaternary structure, interacts with TH1L/NELFD. Zn(2+) serves as cofactor. In terms of processing, dephosphorylation by the SHOC2-MRAS-PP1c (SMP) complex consisting of SHOC2, GTP-bound M-Ras/MRAS and the catalytic subunit of protein phosphatase 1 (PPP1CA, PPP1CB or PPP1CC); this relieves inactivation and stimulates kinase activity.

It carries out the reaction L-seryl-[protein] + ATP = O-phospho-L-seryl-[protein] + ADP + H(+). It catalyses the reaction L-threonyl-[protein] + ATP = O-phospho-L-threonyl-[protein] + ADP + H(+). Its function is as follows. Involved in the transduction of mitogenic signals from the cell membrane to the nucleus. May also regulate the TOR signaling cascade. Phosphorylates PFKFB2. The sequence is that of Serine/threonine-protein kinase A-Raf (Araf) from Rattus norvegicus (Rat).